The primary structure comprises 185 residues: Elongation factor P (185 aa).

The protein belongs to the elongation factor P family.

The protein resides in the cytoplasm. The protein operates within protein biosynthesis; polypeptide chain elongation. Its function is as follows. Involved in peptide bond synthesis. Stimulates efficient translation and peptide-bond synthesis on native or reconstituted 70S ribosomes in vitro. Probably functions indirectly by altering the affinity of the ribosome for aminoacyl-tRNA, thus increasing their reactivity as acceptors for peptidyl transferase. This Streptococcus equi subsp. zooepidemicus (strain MGCS10565) protein is Elongation factor P.